Consider the following 43-residue polypeptide: Protein PsbN (43 aa).

A helical membrane pass occupies residues 5-27 (TLVAIPISCLLVSFTGYALYTAF).

The protein belongs to the PsbN family.

The protein resides in the plastid. It is found in the chloroplast thylakoid membrane. Functionally, may play a role in photosystem I and II biogenesis. This is Protein PsbN from Sphagnum cuspidatum (Bog moss).